A 341-amino-acid chain; its full sequence is MTKPIILTGDRPTGKLHIGHYVGSLKNRVLLQNEGSYTLFVFLADQQALTDHAKDPQTIVESIGNVALDYLAVGLDPNKSTLFIQSQIPELAELSMYYMNLVSLARLERNPTVKTEIAQKGFGESIPAGFLVYPVAQAADITAFKANLVPVGTDQKPMIEQTREIVRSFNHAYNCQVLVEPEGIYPENDAAGRLPGLDGNAKMSKSLNNGIFLADDMDTVKKKVMSMYTDPNHIKVEEPGQIEGNMVFHYLDVFGRDEDQKEITAMKEHYQKGGLGDVKTKRYLLDILERELSPIRERRLEYAKDMGQVYQMLQKGSEKAQAVAASTLDEVKSAMGLNYFK.

ATP is bound by residues 11 to 13 (RPT) and 19 to 20 (GH). Residues 12–20 (PTGKLHIGH) carry the 'HIGH' region motif. Residue D140 coordinates L-tryptophan. ATP-binding positions include 152 to 154 (GTD), L194, and 202 to 206 (KMSKS). The 'KMSKS' region motif lies at 202 to 206 (KMSKS).

This sequence belongs to the class-I aminoacyl-tRNA synthetase family. In terms of assembly, homodimer.

Its subcellular location is the cytoplasm. The enzyme catalyses tRNA(Trp) + L-tryptophan + ATP = L-tryptophyl-tRNA(Trp) + AMP + diphosphate + H(+). Catalyzes the attachment of tryptophan to tRNA(Trp). The sequence is that of Tryptophan--tRNA ligase from Streptococcus agalactiae serotype III (strain NEM316).